The chain runs to 85 residues: MSSLMISTAMKGKAPYRQVRDGYIAQPHNCAYHCLKISSGCDTLCKENGATSGHCGHKSGHGSACWCKDLPDKVGIIVHGEKCHR.

The N-terminal stretch at 1–18 is a signal peptide; it reads MSSLMISTAMKGKAPYRQ. Residues 20-84 enclose the LCN-type CS-alpha/beta domain; the sequence is RDGYIAQPHN…GIIVHGEKCH (65 aa). Cystine bridges form between C30/C83, C34/C55, C41/C65, and C45/C67.

This sequence belongs to the long (4 C-C) scorpion toxin superfamily. Sodium channel inhibitor family. Alpha subfamily. Expressed by the venom gland.

The protein resides in the secreted. Alpha toxins bind voltage-independently at site-3 of sodium channels (Nav) and inhibit the inactivation of the activated channels, thereby blocking neuronal transmission. This toxin is active only on insects. The polypeptide is Alpha-insect toxin Bot14 (Buthus occitanus tunetanus (Common European scorpion)).